The following is a 430-amino-acid chain: 3-oxo-tetronate kinase (430 aa).

Residues Ser-268, 366–369 (GGET), and Gly-410 each bind ATP.

The protein belongs to the four-carbon acid sugar kinase family.

It catalyses the reaction 3-dehydro-L-erythronate + ATP = 3-dehydro-4-O-phospho-L-erythronate + ADP + H(+). It carries out the reaction 3-dehydro-D-erythronate + ATP = 3-dehydro-4-O-phospho-D-erythronate + ADP + H(+). In terms of biological role, catalyzes the ATP-dependent phosphorylation of 3-oxo-tetronate to 3-oxo-tetronate 4-phosphate. This Pseudomonas fluorescens (strain ATCC BAA-477 / NRRL B-23932 / Pf-5) protein is 3-oxo-tetronate kinase.